A 64-amino-acid polypeptide reads, in one-letter code: UPF0434 protein TERTU_2813 (64 aa).

It belongs to the UPF0434 family.

This is UPF0434 protein TERTU_2813 from Teredinibacter turnerae (strain ATCC 39867 / T7901).